The following is a 258-amino-acid chain: MRVAPSGGPPHHHAMIRATPPKRRLKAGTINVAPSFMRERDLMECGVWPVAGCDEVGRGPLAGPVVAAAVVLDPNHIPKGIDDSKRLTAARREELFEEIVATASFAVACAPIERIDRDNILRASLWALARAVHALPDTPKHVFVDGRDRIDIACACEPVIGGDGLVLSIAAASIVAKVTRDRLMCKLARDCPGYGFETHKGYAVPGHLEALGRLGPSSHHRSFFAPVVAARERHRALLAGASASISETSATVAVEAVI.

The segment at 1–20 (MRVAPSGGPPHHHAMIRATP) is disordered. Basic residues predominate over residues 10–20 (PHHHAMIRATP). Positions 48–236 (WPVAGCDEVG…VVAARERHRA (189 aa)) constitute an RNase H type-2 domain. Positions 54, 55, and 145 each coordinate a divalent metal cation.

The protein belongs to the RNase HII family. The cofactor is Mn(2+). Mg(2+) serves as cofactor.

It is found in the cytoplasm. The catalysed reaction is Endonucleolytic cleavage to 5'-phosphomonoester.. Endonuclease that specifically degrades the RNA of RNA-DNA hybrids. This is Ribonuclease HII from Nitrobacter winogradskyi (strain ATCC 25391 / DSM 10237 / CIP 104748 / NCIMB 11846 / Nb-255).